Here is a 35-residue protein sequence, read N- to C-terminus: Photosystem II reaction center protein T (35 aa).

A helical transmembrane segment spans residues 3–23 (ALVYTFLLVGTLGIIFFAIFF).

Belongs to the PsbT family. In terms of assembly, PSII is composed of 1 copy each of membrane proteins PsbA, PsbB, PsbC, PsbD, PsbE, PsbF, PsbH, PsbI, PsbJ, PsbK, PsbL, PsbM, PsbT, PsbY, PsbZ, Psb30/Ycf12, at least 3 peripheral proteins of the oxygen-evolving complex and a large number of cofactors. It forms dimeric complexes.

The protein localises to the plastid. The protein resides in the chloroplast thylakoid membrane. Found at the monomer-monomer interface of the photosystem II (PS II) dimer, plays a role in assembly and dimerization of PSII. PSII is a light-driven water plastoquinone oxidoreductase, using light energy to abstract electrons from H(2)O, generating a proton gradient subsequently used for ATP formation. The polypeptide is Photosystem II reaction center protein T (Chara vulgaris (Common stonewort)).